The sequence spans 496 residues: Putative (R)-citramalate synthase CimA (496 aa).

Residues 3-253 enclose the Pyruvate carboxyltransferase domain; it reads VRVLDTTLRD…DTSINIEMLY (251 aa).

The protein belongs to the alpha-IPM synthase/homocitrate synthase family. As to quaternary structure, homodimer.

It catalyses the reaction pyruvate + acetyl-CoA + H2O = (3R)-citramalate + CoA + H(+). It functions in the pathway amino-acid biosynthesis; L-isoleucine biosynthesis; 2-oxobutanoate from pyruvate: step 1/3. Its function is as follows. Catalyzes the condensation of pyruvate and acetyl-coenzyme A to form (R)-citramalate. The sequence is that of Putative (R)-citramalate synthase CimA from Methanothermobacter thermautotrophicus (strain ATCC 29096 / DSM 1053 / JCM 10044 / NBRC 100330 / Delta H) (Methanobacterium thermoautotrophicum).